A 418-amino-acid polypeptide reads, in one-letter code: Actin-related protein 3 (418 aa).

An N-acetylalanine modification is found at A2. Residues K240, K244, K251, and K254 each carry the N6-acetyllysine modification.

Belongs to the actin family. ARP3 subfamily. As to quaternary structure, component of the Arp2/3 complex composed of ACTR2/ARP2, ACTR3/ARP3, ARPC1B/p41-ARC, ARPC2/p34-ARC, ARPC3/p21-ARC, ARPC4/p20-ARC and ARPC5/p16-ARC. Interacts with WHDC1. Interacts weakly with MEFV. Interacts with AVIL. In terms of assembly, (Microbial infection) Interacts with bacterium B.thailandensis BimA.

Its subcellular location is the cytoplasm. The protein localises to the cytoskeleton. The protein resides in the cell projection. It is found in the nucleus. In terms of biological role, ATP-binding component of the Arp2/3 complex, a multiprotein complex that mediates actin polymerization upon stimulation by nucleation-promoting factor (NPF). The Arp2/3 complex mediates the formation of branched actin networks in the cytoplasm, providing the force for cell motility. Seems to contact the pointed end of the daughter actin filament. In podocytes, required for the formation of lamellipodia downstream of AVIL and PLCE1 regulation. In addition to its role in the cytoplasmic cytoskeleton, the Arp2/3 complex also promotes actin polymerization in the nucleus, thereby regulating gene transcription and repair of damaged DNA. The Arp2/3 complex promotes homologous recombination (HR) repair in response to DNA damage by promoting nuclear actin polymerization, leading to drive motility of double-strand breaks (DSBs). Plays a role in ciliogenesis. In Mus musculus (Mouse), this protein is Actin-related protein 3 (Actr3).